The chain runs to 519 residues: Sorting nexin-2 (519 aa).

Positions 1–104 (MAAEREPPPL…EPSPAVTPVT (104 aa)) are disordered. Composition is skewed to low complexity over residues 27–50 (LFTSTVSTLESSPSSPEPASLPAE) and 93–104 (SSEPSPAVTPVT). Residue S97 is modified to Phosphoserine. 2 positions are modified to phosphothreonine: T101 and T104. A phosphoserine mark is found at S117 and S119. The 130-residue stretch at 140–269 (FDIEIGVSDP…QFLESSELPR (130 aa)) folds into the PX domain. A 1,2-diacyl-sn-glycero-3-phospho-(1D-myo-inositol-3-phosphate) is bound by residues R183, S185, K211, and R235. At S185 the chain carries Phosphoserine. Residues 260–519 (QFLESSELPR…AFLPEAKAIA (260 aa)) form an interaction with RhoG region. Position 277 is a phosphoserine (S277). Residues 278-295 (GAGILRMVNKAADAVNKM) form a membrane-binding amphipathic helix region. Residues 299 to 519 (MNESDAWFEE…AFLPEAKAIA (221 aa)) enclose the BAR domain. The residue at position 469 (K469) is an N6-acetyllysine.

Belongs to the sorting nexin family. Predominantly forms heterodimers with BAR domain-containing sorting nexins SNX5, SNX6 and SNX32; can self-associate to form homodimers. The heterodimers are proposed to self-assemble into helical arrays on the membrane to stabilize and expand local membrane curvature underlying endosomal tubule formation. Thought to be a component of the originally described retromer complex (also called SNX-BAR retromer) which is a pentamer containing the heterotrimeric retromer cargo-selective complex (CSC), also described as vacuolar protein sorting subcomplex (VPS), and a heterodimeric membrane-deforming subcomplex formed between SNX1 or SNX2 and SNX5 or SNX6 (also called SNX-BAR subcomplex); the respective CSC and SNX-BAR subcomplexes associate with low affinity. Interacts with SNX5, SNX6, SNX32, VPS26A, VPS29, VPS35, FNBP1, KALRN, RHOG (GDP-bound form).

The protein localises to the early endosome membrane. It localises to the cell projection. It is found in the lamellipodium. Its function is as follows. Involved in several stages of intracellular trafficking. Interacts with membranes containing phosphatidylinositol 3-phosphate (PtdIns(3P)) or phosphatidylinositol 3,5-bisphosphate (PtdIns(3,5)P2). Acts in part as component of the retromer membrane-deforming SNX-BAR subcomplex. The SNX-BAR retromer mediates retrograde transport of cargo proteins from endosomes to the trans-Golgi network (TGN) and is involved in endosome-to-plasma membrane transport for cargo protein recycling. The SNX-BAR subcomplex functions to deform the donor membrane into a tubular profile called endosome-to-TGN transport carrier (ETC). Can sense membrane curvature and has in vitro vesicle-to-membrane remodeling activity. Required for retrograde endosome-to-TGN transport of TGN38. Promotes KALRN- and RHOG-dependent but retromer-independent membrane remodeling such as lamellipodium formation; the function is dependent on GEF activity of KALRN. In Homo sapiens (Human), this protein is Sorting nexin-2 (SNX2).